The chain runs to 196 residues: Peptide methionine sulfoxide reductase (196 aa).

Over residues 1–14 (MEGNNSSSKSTTNP) the composition is skewed to polar residues. The interval 1 to 23 (MEGNNSSSKSTTNPALDPDLDSP) is disordered.

The protein belongs to the MsrA Met sulfoxide reductase family.

It catalyses the reaction L-methionyl-[protein] + [thioredoxin]-disulfide + H2O = L-methionyl-(S)-S-oxide-[protein] + [thioredoxin]-dithiol. The enzyme catalyses [thioredoxin]-disulfide + L-methionine + H2O = L-methionine (S)-S-oxide + [thioredoxin]-dithiol. In terms of biological role, has an important function as a repair enzyme for proteins that have been inactivated by oxidation. Catalyzes the reversible oxidation-reduction of methionine sulfoxide in proteins to methionine. The sequence is that of Peptide methionine sulfoxide reductase (E4) from Solanum lycopersicum (Tomato).